The chain runs to 533 residues: CEP295 N-terminal-like protein (533 aa).

Disordered regions lie at residues Met1–Gln40, Arg84–Arg176, Leu286–Glu333, and Ala370–Glu399. A coiled-coil region spans residues Gln40 to Leu72. Basic and acidic residues predominate over residues Lys107 to Arg126. Residues Met416–Lys531 are a coiled coil.

As to expression, expressed in mature spermatozoa (at protein level). Detected in retina, lung and kidney. In brain, highly expressed in brain-stem, cerebral cortex and thalamus with lesser expression in cerebellum and hippocampus.

The protein localises to the cell projection. It localises to the cilium. This chain is CEP295 N-terminal-like protein, found in Mus musculus (Mouse).